We begin with the raw amino-acid sequence, 436 residues long: Histidine--tRNA ligase (436 aa).

It belongs to the class-II aminoacyl-tRNA synthetase family. As to quaternary structure, homodimer.

The protein localises to the cytoplasm. The enzyme catalyses tRNA(His) + L-histidine + ATP = L-histidyl-tRNA(His) + AMP + diphosphate + H(+). In Prochlorococcus marinus (strain MIT 9313), this protein is Histidine--tRNA ligase.